Here is a 2172-residue protein sequence, read N- to C-terminus: Non-reducing polyketide synthase dpfgA (2172 aa).

Residues 74–181 (EWIKCGNSSL…LALCVGALVD (108 aa)) form an N-terminal acylcarrier protein transacylase domain (SAT) region. The Ketosynthase family 3 (KS3) domain occupies 389–783 (DDSIAIIGVS…GTNAAMLVCQ (395 aa)). Active-site for beta-ketoacyl synthase activity residues include C529, H665, and H706. The segment at 895 to 1197 (VFAGQTGRQA…SFHSILLQGQ (303 aa)) is malonyl-CoA:ACP transacylase (MAT) domain. The active-site For acyl/malonyl transferase activity is S981. The interval 1270 to 1403 (PELVSLAGPT…GTINWQGQGC (134 aa)) is N-terminal hotdog fold. A PKS/mFAS DH domain is found at 1270 to 1581 (PELVSLAGPT…LKRIPIRSLQ (312 aa)). The interval 1277-1575 (GPTDGETVEF…EIIGASLKRI (299 aa)) is product template (PT) domain. Residues 1428 to 1581 (SASTVQGLFV…LKRIPIRSLQ (154 aa)) are C-terminal hotdog fold. Disordered stretches follow at residues 1608-1631 (DSDSDLPDSEANSPRVGSDLHADF) and 1650-1672 (YPMDSSSFSSAQPPSSASSVLSD). The span at 1650 to 1668 (YPMDSSSFSSAQPPSSASS) shows a compositional bias: low complexity. The region spanning 1671–1747 (SDHDQESTAL…DLYRMVLNHD (77 aa)) is the Carrier domain. S1707 carries the O-(pantetheine 4'-phosphoryl)serine modification. The disordered stretch occupies residues 1751–1773 (DRGSTVLSDKAPKSKSDSSLHGQ). The interval 1975 to 2155 (EFLHRVLSRL…DAGFIHVDWT (181 aa)) is methyltransferase (CMeT) domain.

Its pathway is secondary metabolite biosynthesis; terpenoid biosynthesis. Functionally, non-reducing polyketide synthase; part of the gene cluster that mediates the biosynthesis of diterpenoid pyrones. The first step of the pathway is the synthesis of the alpha-pyrone moiety by the polyketide synthase dpfgA via condensation of one acetyl-CoA starter unit with 3 malonyl-CoA units and 2 methylations. The alpha-pyrone is then combined with geranylgeranyl pyrophosphate (GGPP) formed by the GGPP synthase dpfgD through the action of the prenyltransferase dpfgC to yield a linear alpha-pyrone diterpenoid. Subsequent steps in the diterpenoid pyrone biosynthetic pathway involve the decalin core formation, which is initiated by the epoxidation of the C10-C11 olefin by the FAD-dependent oxidoreductase dpfgE, and is followed by a cyclization cascade catalyzed by the terpene cyclase dpfgB. The short chain dehydrogenase/reductase dpfgG then oxidizes the 8S hydroxy group to a ketone and the short chain dehydrogenase/reductase dpfgH reduces the ketone to the 8R hydroxy group to yield higginsianin B. Higginsianin B is further methylated by the methyltransferase dpfgI to produce the intermediate named FDDP B. The cytochrome P450 monooxygenase dfgpJ then catalyzes a three-step oxidation at C-27 to generate a carboxylic acid as well as C-26 hydroxylation. Finally, methyltransferase dpfgK methylates the carboxylic acid generated by dpfgJ, yielding the final diterpenoid pyrones from the pathway which were named FDDP D and FDDP E. This Gibberella zeae (strain ATCC MYA-4620 / CBS 123657 / FGSC 9075 / NRRL 31084 / PH-1) (Wheat head blight fungus) protein is Non-reducing polyketide synthase dpfgA.